A 209-amino-acid chain; its full sequence is Glutathione S-transferase 2 (209 aa).

The 81-residue stretch at methionine 1–aspartate 81 folds into the GST N-terminal domain. Glutathione is bound by residues serine 10, arginine 51–isoleucine 53, and glutamate 65–arginine 67. Positions aspartate 88–lysine 209 constitute a GST C-terminal domain.

This sequence belongs to the GST superfamily. Theta family. Homodimer.

The enzyme catalyses RX + glutathione = an S-substituted glutathione + a halide anion + H(+). In terms of biological role, conjugation of reduced glutathione to a wide number of exogenous and endogenous hydrophobic electrophiles. In Anopheles gambiae (African malaria mosquito), this protein is Glutathione S-transferase 2 (GstD2).